A 159-amino-acid chain; its full sequence is MPAKLQLDVLRTLQSSARHGTQTLKNSNFLERFHKDRIVFCLPFFPALFLVPVQKVLQHLCLRFTQVAPYFIIQLFDLPSRHAENLAPLLASCRIQYTNCFSSSSNGQVPSIISLYLRVDLSPFYAKIFQISYRVPMIWLDVFQVFFVFLVISQHSLHS.

2 consecutive transmembrane segments (helical) span residues Ile38–Gln58 and Val135–His155.

It belongs to the UPF0479 family.

Its subcellular location is the membrane. In Saccharomyces cerevisiae (strain ATCC 204508 / S288c) (Baker's yeast), this protein is Putative UPF0479 protein YDR545C-A.